The sequence spans 26 residues: IGTQIVXNXMKSIKNIQKITKAMKMV.

The protein belongs to the ATPase gamma chain family. In terms of assembly, F-type ATPases have 2 components, CF(1) - the catalytic core - and CF(0) - the membrane proton channel. CF(1) has five subunits: alpha(3), beta(3), gamma(1), delta(1), epsilon(1). CF(0) has three main subunits: a, b and c.

Its subcellular location is the mitochondrion. It is found in the mitochondrion inner membrane. Its function is as follows. Mitochondrial membrane ATP synthase (F(1)F(0) ATP synthase or Complex V) produces ATP from ADP in the presence of a proton gradient across the membrane which is generated by electron transport complexes of the respiratory chain. F-type ATPases consist of two structural domains, F(1) - containing the extramembraneous catalytic core, and F(0) - containing the membrane proton channel, linked together by a central stalk and a peripheral stalk. During catalysis, ATP synthesis in the catalytic domain of F(1) is coupled via a rotary mechanism of the central stalk subunits to proton translocation. Part of the complex F(1) domain and the central stalk which is part of the complex rotary element. The gamma subunit protrudes into the catalytic domain formed of alpha(3)beta(3). Rotation of the central stalk against the surrounding alpha(3)beta(3) subunits leads to hydrolysis of ATP in three separate catalytic sites on the beta subunits. This is ATP synthase subunit gamma, mitochondrial (ATPC) from Spinacia oleracea (Spinach).